A 206-amino-acid chain; its full sequence is Guanylate kinase (206 aa).

Positions 6-184 (GNLFILSAPS…ALTDIETIVM (179 aa)) constitute a Guanylate kinase-like domain. 13–20 (APSGAGKS) contacts ATP.

The protein belongs to the guanylate kinase family.

Its subcellular location is the cytoplasm. It carries out the reaction GMP + ATP = GDP + ADP. Essential for recycling GMP and indirectly, cGMP. This is Guanylate kinase from Pseudoalteromonas translucida (strain TAC 125).